Consider the following 254-residue polypeptide: MDNYADLSDTELTTLLRRYNIPHGPVVGSTRRLYEKKIFEYETQRRRLSPPSSSAASSYSFSDLNSTRGDADMYDLPKKEDALLYQSKGYNDDYYEESYFTTRTYGEPESAGPSRAVRQSVTSFPDADAFHHQVHDDDLLSSSEEECKDRERPMYGRDSAYQSITHYRPVSASRSSLDLSYYPTSSSTSFMSSSSSSSSWLTRRAIRPENRAPGAGLGQDRQVPLWGQLLLFLVFVIVLFFIYHFMQAEEGNPF.

Position 1 is an N-acetylmethionine (Met1). Residues 1–45 (MDNYADLSDTELTTLLRRYNIPHGPVVGSTRRLYEKKIFEYETQR) enclose the LEM domain. Phosphoserine is present on residues Ser8 and Ser29. An interaction with F-actin region spans residues 46-222 (RRLSPPSSSA…PGAGLGQDRQ (177 aa)). A Phosphoserine; by PKA modification is found at Ser49. Phosphoserine occurs at positions 54, 60, 87, 98, 141, 142, and 143. Tyr161 carries the phosphotyrosine modification. Residues 168 to 186 (RPVSASRSSLDLSYYPTSS) form an interaction with CTNNB1 region. A phosphoserine mark is found at Ser171, Ser173, and Ser175. The helical transmembrane segment at 223-243 (VPLWGQLLLFLVFVIVLFFIY) threads the bilayer.

In terms of assembly, interacts with lamins A and C, BANF1, GMCL, BCLAF1 and YTHDC1/YT521. Interacts with TMEM43; the interaction retains emerin in the nuclear inner membrane. Interacts with SUN1 and SUN2. Interacts with ACTB, SPTAN1, F-actin, CTNNB1 and beta-tubulin. Interacts with TMEM201. Interacts with NEMP1. Found in four different phosphorylated forms, three of which appear to be associated with the cell cycle. As to expression, skeletal muscle, heart, colon, testis, ovary and pancreas.

It localises to the nucleus inner membrane. It is found in the nucleus outer membrane. Functionally, stabilizes and promotes the formation of a nuclear actin cortical network. Stimulates actin polymerization in vitro by binding and stabilizing the pointed end of growing filaments. Inhibits beta-catenin activity by preventing its accumulation in the nucleus. Acts by influencing the nuclear accumulation of beta-catenin through a CRM1-dependent export pathway. Links centrosomes to the nuclear envelope via a microtubule association. Required for proper localization of non-farnesylated prelamin-A/C. Together with NEMP1, contributes to nuclear envelope stiffness in germ cells. EMD and BAF are cooperative cofactors of HIV-1 infection. Association of EMD with the viral DNA requires the presence of BAF and viral integrase. The association of viral DNA with chromatin requires the presence of BAF and EMD. This is Emerin (EMD) from Homo sapiens (Human).